Here is a 227-residue protein sequence, read N- to C-terminus: Cytochrome c oxidase subunit 2 (227 aa).

Residues 1–14 (MAYPFQLGLQDASS) are Mitochondrial intermembrane-facing. A helical transmembrane segment spans residues 15-45 (PIMEELTNFHDHTLMIVFLISSLVLYIISSM). Residues 46 to 59 (LTTKMTHTSTMDAQ) are Mitochondrial matrix-facing. Residues 60–87 (EVETIWTVLPAVILILIALPSLRILYMM) traverse the membrane as a helical segment. Topologically, residues 88–227 (DEINNPVLTV…HFENWSTSMI (140 aa)) are mitochondrial intermembrane. Residues His-161, Cys-196, Glu-198, Cys-200, His-204, and Met-207 each coordinate Cu cation. Glu-198 serves as a coordination point for Mg(2+).

This sequence belongs to the cytochrome c oxidase subunit 2 family. As to quaternary structure, component of the cytochrome c oxidase (complex IV, CIV), a multisubunit enzyme composed of 14 subunits. The complex is composed of a catalytic core of 3 subunits MT-CO1, MT-CO2 and MT-CO3, encoded in the mitochondrial DNA, and 11 supernumerary subunits COX4I, COX5A, COX5B, COX6A, COX6B, COX6C, COX7A, COX7B, COX7C, COX8 and NDUFA4, which are encoded in the nuclear genome. The complex exists as a monomer or a dimer and forms supercomplexes (SCs) in the inner mitochondrial membrane with NADH-ubiquinone oxidoreductase (complex I, CI) and ubiquinol-cytochrome c oxidoreductase (cytochrome b-c1 complex, complex III, CIII), resulting in different assemblies (supercomplex SCI(1)III(2)IV(1) and megacomplex MCI(2)III(2)IV(2)). Found in a complex with TMEM177, COA6, COX18, COX20, SCO1 and SCO2. Interacts with TMEM177 in a COX20-dependent manner. Interacts with COX20. Interacts with COX16. Cu cation serves as cofactor.

The protein resides in the mitochondrion inner membrane. It catalyses the reaction 4 Fe(II)-[cytochrome c] + O2 + 8 H(+)(in) = 4 Fe(III)-[cytochrome c] + 2 H2O + 4 H(+)(out). Its function is as follows. Component of the cytochrome c oxidase, the last enzyme in the mitochondrial electron transport chain which drives oxidative phosphorylation. The respiratory chain contains 3 multisubunit complexes succinate dehydrogenase (complex II, CII), ubiquinol-cytochrome c oxidoreductase (cytochrome b-c1 complex, complex III, CIII) and cytochrome c oxidase (complex IV, CIV), that cooperate to transfer electrons derived from NADH and succinate to molecular oxygen, creating an electrochemical gradient over the inner membrane that drives transmembrane transport and the ATP synthase. Cytochrome c oxidase is the component of the respiratory chain that catalyzes the reduction of oxygen to water. Electrons originating from reduced cytochrome c in the intermembrane space (IMS) are transferred via the dinuclear copper A center (CU(A)) of subunit 2 and heme A of subunit 1 to the active site in subunit 1, a binuclear center (BNC) formed by heme A3 and copper B (CU(B)). The BNC reduces molecular oxygen to 2 water molecules using 4 electrons from cytochrome c in the IMS and 4 protons from the mitochondrial matrix. This is Cytochrome c oxidase subunit 2 (MT-CO2) from Lophuromys flavopunctatus (Yellow-spotted brush-furred rat).